The following is a 366-amino-acid chain: MSFSFFRKAPKFWERRGPTSLLLWPLSWIYGLVLHARKLIQDTGFVKPKPAPVPIIIVGNIRVGGTGKTPIVIALAERLQQLGWNPGIISRGYGGKGSSAQTSPLQVKSNSDPTLVGDEPVLIARRTHDQFPIWVFPKRQQSIRELLKHSPNVNVIISDDGLQHSGLARWPAREGGRDIELVVRDERGEGNRFLLPAGPLREPATRERDATLFTGKIKSDDHQIGLQDEYFLGRRAFSLLSNLGKPYQLNNPANTQTLTQIADSYLPNKITTVAALGNPQRFFDDLLKNGIAGKTISLPDHATYTPEFFTKLNAQCILITEKDAVKCSAIMDECIWVVPMSLALSDNLAEWLQSILQRPDPYRYTL.

62–69 provides a ligand contact to ATP; it reads RVGGTGKT.

This sequence belongs to the LpxK family.

The catalysed reaction is a lipid A disaccharide + ATP = a lipid IVA + ADP + H(+). The protein operates within glycolipid biosynthesis; lipid IV(A) biosynthesis; lipid IV(A) from (3R)-3-hydroxytetradecanoyl-[acyl-carrier-protein] and UDP-N-acetyl-alpha-D-glucosamine: step 6/6. Transfers the gamma-phosphate of ATP to the 4'-position of a tetraacyldisaccharide 1-phosphate intermediate (termed DS-1-P) to form tetraacyldisaccharide 1,4'-bis-phosphate (lipid IVA). This chain is Tetraacyldisaccharide 4'-kinase, found in Polynucleobacter necessarius subsp. necessarius (strain STIR1).